The following is a 176-amino-acid chain: Large ribosomal subunit protein eL20 (176 aa).

A Glycyl lysine isopeptide (Lys-Gly) (interchain with G-Cter in SUMO2) cross-link involves residue Lys11. Tyr63 is subject to Phosphotyrosine. At Ser71 the chain carries Phosphoserine. Residue Lys76 is modified to N6-succinyllysine. Residue Ser123 is modified to Phosphoserine. Residues Lys128 and Lys170 each participate in a glycyl lysine isopeptide (Lys-Gly) (interchain with G-Cter in SUMO2) cross-link.

Belongs to the eukaryotic ribosomal protein eL20 family. In terms of assembly, component of the large ribosomal subunit. Binds IPO9 with high affinity.

It is found in the cytoplasm. Component of the large ribosomal subunit. The ribosome is a large ribonucleoprotein complex responsible for the synthesis of proteins in the cell. This Mus musculus (Mouse) protein is Large ribosomal subunit protein eL20 (Rpl18a).